The following is a 1520-amino-acid chain: DNA topoisomerase 2 top-2 (1520 aa).

Positions 1-10 (MSDSDSEFSI) are enriched in acidic residues. Residues 1 to 40 (MSDSDSEFSIEDSPKKKTAPKKEKASPKKKKDDANESMVM) are disordered. The segment covering 12–34 (DSPKKKTAPKKEKASPKKKKDDA) has biased composition (basic and acidic residues). Residues asparagine 126, asparagine 155, 183 to 185 (SSN), 196 to 203 (GRNGYGAK), and 411 to 413 (QTK) contribute to the ATP site. One can recognise a Toprim domain in the interval 490–607 (CTLILTEGDS…SLIQRNFVEE (118 aa)). Glutamate 496, aspartate 576, and aspartate 578 together coordinate Mg(2+). A Topo IIA-type catalytic domain is found at 750–1219 (IPCLVDGFKP…TWQDLWHEDL (470 aa)). Catalysis depends on tyrosine 840, which acts as the O-(5'-phospho-DNA)-tyrosine intermediate. Residues 1249 to 1520 (AADAKTGRGP…RGRVVDSDSD (272 aa)) are disordered. Positions 1283–1320 (TKAKYEKMSQPKKERVKKEPKEPKEPKKVKKEGQDIKK) are enriched in basic and acidic residues. The span at 1342–1364 (MSEESDVEFDEGIDFDSDDDGVE) shows a compositional bias: acidic residues.

The protein belongs to the type II topoisomerase family. As to quaternary structure, homodimer. Interacts with nmad-1; the interaction is required for localization of top-2 to DNA. Interacts with gcna-1; this interaction allows the resolution of topoisomerase 2 DNA-protein cross-links. Mg(2+) is required as a cofactor. It depends on Mn(2+) as a cofactor. Ca(2+) serves as cofactor. Expressed in the hermaphrodite and male germline.

It localises to the nucleus. It is found in the nucleoplasm. The protein localises to the chromosome. Its subcellular location is the cytoplasm. The protein resides in the cytoskeleton. It localises to the spindle. It catalyses the reaction ATP-dependent breakage, passage and rejoining of double-stranded DNA.. In terms of biological role, control of topological states of DNA by transient breakage and subsequent rejoining of DNA strands. Topoisomerase II makes double-strand breaks. Essential during mitosis in the adult germline and during embryogenesis for proper segregation of daughter chromosomes. Required for centromere resolution during mitosis. Required for chromosome segregation in anaphase of meiosis I during spermatogenesis. Promotes cleavage furrow stability during cytokinesis upon the presence of chromatin obstructions. Promotes DNA break formation upon zygotic genome activation in the Z2 and Z3 primordial germ cells in L1 larvae, thereby activating a checkpoint response. Essential for embryogenesis. This Caenorhabditis elegans protein is DNA topoisomerase 2 top-2.